Reading from the N-terminus, the 312-residue chain is Chitin deacetylase 2 (312 aa).

Residues 1-44 (MRIQLNTIDLQCIIALSCLGQFVHAEANREDLKQIDFQFPVLER) form the signal peptide. Cysteine 117 and cysteine 300 are joined by a disulfide. Positions 118–307 (SKLSQTFDDG…SHCVGGIDYI (190 aa)) constitute a NodB homology domain. Aspartate 125 (proton acceptor) is an active-site residue. Aspartate 125 provides a ligand contact to acetate. Aspartate 126 is a binding site for Co(2+). Asparagine 142 carries an N-linked (GlcNAc...) asparagine glycan. Co(2+) contacts are provided by histidine 172 and histidine 176. Residues asparagine 181 and asparagine 199 are each glycosylated (N-linked (GlcNAc...) asparagine). Residue tyrosine 213 coordinates acetate. N-linked (GlcNAc...) asparagine glycosylation is found at asparagine 246 and asparagine 263. Histidine 273 serves as the catalytic Proton donor.

Belongs to the polysaccharide deacetylase family. Monomer. Co(2+) is required as a cofactor. N-glycosylated.

The protein resides in the prospore. The catalysed reaction is [(1-&gt;4)-N-acetyl-beta-D-glucosaminyl](n) + n H2O = chitosan + n acetate. In terms of biological role, hydrolyzes the N-acetamido groups of N-acetyl-D-glucosamine residues in chitin to form chitosan and acetate. Chitosan is a component of the spore wall. The sequence is that of Chitin deacetylase 2 from Saccharomyces cerevisiae (strain ATCC 204508 / S288c) (Baker's yeast).